The primary structure comprises 790 residues: MQVRVRLSLLLLCAVLLGSAAATSDDKTNQDDSLDSKSSLPTDESVKDHTTTGKVVAGQIFVDSEEAEVESLLQDEEDSSKTQEEEISFLESPNPSSKTYEELKRVRKPVLTAIEGTAHGEPCHFPFLFLDKEYDECTSDGREDGRLWCATTYDYKTDEKWGFCETEEDAAKRRQMQEAEMIYQAGMKILNGSNRKSQKREAYRYLQKAAGMNHTKALERVSYALLFGDYLTQNIQAAKEMFEKLTEEGSPKGQTGLGFLYASGLGVNSSQAKALVYYTFGALGGNLIAHMILGYRYWAGIGVLQSCESALTHYRLVANHVASDISLTGGSVVQRIRLPDEVENPGMNSGMLEEDLIQYYQFLAEKGDVQAQVGLGQLHLHGGRGVEQNHQRAFDYFNLAANAGNSHAMAFLGKMYSEGSDIVPQSNETALHYFKKAADMGNPVGQSGLGMAYLYGRGVQVNYDLALKYFQKAAEQGWVDGQLQLGSMYYNGIGVKRDYKQALKYFNLASQGGHILAFYNLAQMHASGTGVMRSCHTAVELFKNVCERGRWSERLMTAYNSYKDEDYNAAVVQYLLLAEQGYEVAQSNAAFILDQREATIVGENETYPRALLHWNRAASQGYTVARIKLGDYHFYGFGTDVDYETAFIHYRLASEQQHSAQAMFNLGYMHEKGLGIKQDIHLAKRFYDMAAEASPDAQVPVFLALCKLGVVYFLQYIREANIRDLFTQLDMDQLLGPEWDLYLMTIIALLLGTVIAYRQRQHQDIPVPRPPGPRPAPPQQEGPPEQQPPQ.

A signal peptide spans 1-21; the sequence is MQVRVRLSLLLLCAVLLGSAA. The tract at residues 22 to 51 is disordered; it reads ATSDDKTNQDDSLDSKSSLPTDESVKDHTT. Residues 22–734 are Lumenal-facing; it reads ATSDDKTNQD…LFTQLDMDQL (713 aa). The interval 23–733 is interaction with ERLEC1, OS9 and SYVN1; sequence TSDDKTNQDD…DLFTQLDMDQ (711 aa). At S64 the chain carries Phosphoserine. Positions 67 to 78 are enriched in acidic residues; it reads AEVESLLQDEED. A disordered region spans residues 67–98; that stretch reads AEVESLLQDEEDSSKTQEEEISFLESPNPSSK. The Fibronectin type-II domain maps to 118–166; it reads AHGEPCHFPFLFLDKEYDECTSDGREDGRLWCATTYDYKTDEKWGFCET. Disulfide bonds link C123–C149 and C137–C164. Sel1-like repeat units follow at residues 179 to 214, 215 to 250, 251 to 286, 287 to 322, 369 to 405, 406 to 442, 443 to 478, 479 to 514, and 515 to 550; these read AEMI…GMNH, TKAL…EEGS, PKGQ…LGGN, LIAH…NHVA, VQAQ…NAGN, SHAM…DMGN, PVGQ…EQGW, VDGQ…QGGH, and ILAF…ERGR. N-linked (GlcNAc...) asparagine glycosylation is found at N191 and N213. Residue N268 is glycosylated (N-linked (GlcNAc...) asparagine). An important for homodimerization and oligomerization region spans residues 348-533; that stretch reads NSGMLEEDLI…MHASGTGVMR (186 aa). N427 is a glycosylation site (N-linked (GlcNAc...) asparagine). A glycan (N-linked (GlcNAc...) asparagine) is linked at N604. 2 Sel1-like repeats span residues 623–658 and 660–695; these read TVAR…EQQH and AQAM…EASP. The segment at 639–719 is interaction with SYVN1; that stretch reads TDVDYETAFI…VVYFLQYIRE (81 aa). Residues 734–790 are mediates retention in the endoplasmic reticulum; it reads LLGPEWDLYLMTIIALLLGTVIAYRQRQHQDIPVPRPPGPRPAPPQQEGPPEQQPPQ. A helical membrane pass occupies residues 735-755; that stretch reads LGPEWDLYLMTIIALLLGTVI. The Cytoplasmic portion of the chain corresponds to 756–790; it reads AYRQRQHQDIPVPRPPGPRPAPPQQEGPPEQQPPQ. The interval 763-790 is disordered; that stretch reads QDIPVPRPPGPRPAPPQQEGPPEQQPPQ. The span at 767-790 shows a compositional bias: pro residues; it reads VPRPPGPRPAPPQQEGPPEQQPPQ.

The protein belongs to the sel-1 family. In terms of assembly, homodimer and homooligomer. May form a complex with ERLEC1, HSPA5, OS9, and SYVN1. Interacts with FOXRED2 and EDEM1. Interacts with LPL and LMF1; may stabilize the complex formed by LPL and LMF1 and thereby promote the export of LPL dimers. Component of the HRD1 complex, which comprises at least SYNV1/HRD1, DERL1/2, FAM8A1, HERPUD1/HERP, OS9, SEL1L and UBE2J1. SYNV1 assembles with SEL1L and FAM8A1 through its transmembrane domains, but interaction with its cytoplasmic domain is required to confer stability to FAM8A1 and enhance recruitment of HERPUD1. The interaction with SYNV1/HRD1 is direct. Post-translationally, N-glycosylated. In terms of tissue distribution, highly expressed in pancreas, white adipose tissue, liver and spleen (at protein level). Detected in heart, brain, spleen, lung, liver, kidney and testis.

The protein resides in the endoplasmic reticulum membrane. Functionally, plays a role in the endoplasmic reticulum quality control (ERQC) system also called ER-associated degradation (ERAD) involved in ubiquitin-dependent degradation of misfolded endoplasmic reticulum proteins. Enhances SYVN1 stability. Plays a role in LPL maturation and secretion. Required for normal differentiation of the pancreas epithelium, and for normal exocrine function and survival of pancreatic cells. May play a role in Notch signaling. This chain is Protein sel-1 homolog 1 (Sel1l), found in Mus musculus (Mouse).